The primary structure comprises 306 residues: SPbeta prophage-derived uncharacterized protein YonG (306 aa).

This is SPbeta prophage-derived uncharacterized protein YonG (yonG) from Bacillus subtilis (strain 168).